The sequence spans 33 residues: Protamine-2C (33 aa).

Residues 1 to 33 (MPRRRRSSRRPVRRRRRPRVSRRRRRRGGRRRR) form a disordered region.

As to expression, testis.

It is found in the nucleus. It localises to the chromosome. Its function is as follows. Protamines substitute for histones in the chromatin of sperm during the haploid phase of spermatogenesis. They compact sperm DNA into a highly condensed, stable and inactive complex. The sequence is that of Protamine-2C from Oncorhynchus mykiss (Rainbow trout).